Consider the following 131-residue polypeptide: MSMSDPIADLLTRIRNAQMVSKTTVTAPSSKVKVAIAQVLKDEGYIDGFQVKTDAGKSELEITLKYYAGRPVIERIERVSRPGLRVYKGRDAIPQVMNGMGVAIVTTPKGVMTDRKARATGVGGEVLCYVA.

Belongs to the universal ribosomal protein uS8 family. In terms of assembly, part of the 30S ribosomal subunit. Contacts proteins S5 and S12.

In terms of biological role, one of the primary rRNA binding proteins, it binds directly to 16S rRNA central domain where it helps coordinate assembly of the platform of the 30S subunit. The protein is Small ribosomal subunit protein uS8 of Delftia acidovorans (strain DSM 14801 / SPH-1).